The primary structure comprises 265 residues: Adenosine 5'-phosphosulfate reductase (265 aa).

Cysteine 135, cysteine 136, cysteine 218, and cysteine 221 together coordinate [4Fe-4S] cluster. Cysteine 246 functions as the Nucleophile; cysteine thiosulfonate intermediate in the catalytic mechanism.

Belongs to the PAPS reductase family. CysH subfamily. [4Fe-4S] cluster serves as cofactor.

It localises to the cytoplasm. It carries out the reaction [thioredoxin]-disulfide + sulfite + AMP + 2 H(+) = adenosine 5'-phosphosulfate + [thioredoxin]-dithiol. It participates in sulfur metabolism; hydrogen sulfide biosynthesis; sulfite from sulfate. Catalyzes the formation of sulfite from adenosine 5'-phosphosulfate (APS) using thioredoxin as an electron donor. This Rhizobium meliloti (strain 1021) (Ensifer meliloti) protein is Adenosine 5'-phosphosulfate reductase.